The primary structure comprises 338 residues: STEAP1 protein (338 aa).

2 helical membrane passes run 70–90 (WHLP…YTLL) and 118–138 (PMVS…AAIV). Residues 117-264 (LPMVSITLLA…TLGIVSLLLG (148 aa)) enclose the Ferric oxidoreductase domain. Positions 139 and 160 each coordinate FAD. The next 4 membrane-spanning stretches (helical) occupy residues 163–183 (FGLL…SYPM), 217–237 (IYVS…VTSI), 252–272 (IQST…LIFA), and 290–310 (FMIA…LLLP). His-174 contacts heme b. FAD-binding residues include Ser-236 and Gln-253. Residue His-267 participates in heme b binding.

The protein belongs to the STEAP family. As to quaternary structure, homotrimer. It depends on FAD as a cofactor. The cofactor is heme b.

It is found in the endosome membrane. The protein resides in the cell membrane. In terms of biological role, does not function as a metalloreductase due to the absence of binding sites for the electron-donating substrate NADPH. The protein is STEAP1 protein (STEAP1) of Sus scrofa (Pig).